The chain runs to 260 residues: Tropinone reductase 2 (260 aa).

18 to 41 serves as a coordination point for NADP(+); the sequence is SRGIGYGIVEELASLGASVYTCSR. Ser-146 is a substrate binding site. The active-site Proton acceptor is the Tyr-159. An NADP(+)-binding site is contributed by 192-196; the sequence is IATSL.

Belongs to the short-chain dehydrogenases/reductases (SDR) family. As to quaternary structure, homodimer.

The catalysed reaction is pseudotropine + NADP(+) = tropinone + NADPH + H(+). The protein operates within alkaloid biosynthesis; tropane alkaloid biosynthesis. Catalyzes the stereospecific reduction of tropinone to pseudotropine. This chain is Tropinone reductase 2 (TR2), found in Datura stramonium (Jimsonweed).